The primary structure comprises 1364 residues: DNA-directed RNA polymerase subunit beta (1364 aa).

This sequence belongs to the RNA polymerase beta chain family. As to quaternary structure, the RNAP catalytic core consists of 2 alpha, 1 beta, 1 beta' and 1 omega subunit. When a sigma factor is associated with the core the holoenzyme is formed, which can initiate transcription.

The enzyme catalyses RNA(n) + a ribonucleoside 5'-triphosphate = RNA(n+1) + diphosphate. DNA-dependent RNA polymerase catalyzes the transcription of DNA into RNA using the four ribonucleoside triphosphates as substrates. This Desulfatibacillum aliphaticivorans protein is DNA-directed RNA polymerase subunit beta.